A 434-amino-acid chain; its full sequence is UDP-N-acetylmuramoylalanine--D-glutamate ligase (434 aa).

113-119 serves as a coordination point for ATP; that stretch reads GSNGKST.

The protein belongs to the MurCDEF family.

The protein resides in the cytoplasm. The enzyme catalyses UDP-N-acetyl-alpha-D-muramoyl-L-alanine + D-glutamate + ATP = UDP-N-acetyl-alpha-D-muramoyl-L-alanyl-D-glutamate + ADP + phosphate + H(+). The protein operates within cell wall biogenesis; peptidoglycan biosynthesis. Its function is as follows. Cell wall formation. Catalyzes the addition of glutamate to the nucleotide precursor UDP-N-acetylmuramoyl-L-alanine (UMA). This chain is UDP-N-acetylmuramoylalanine--D-glutamate ligase, found in Pasteurella multocida (strain Pm70).